A 187-amino-acid chain; its full sequence is Elongation factor P (187 aa).

Belongs to the elongation factor P family.

It localises to the cytoplasm. It functions in the pathway protein biosynthesis; polypeptide chain elongation. Its function is as follows. Involved in peptide bond synthesis. Stimulates efficient translation and peptide-bond synthesis on native or reconstituted 70S ribosomes in vitro. Probably functions indirectly by altering the affinity of the ribosome for aminoacyl-tRNA, thus increasing their reactivity as acceptors for peptidyl transferase. This Mycolicibacterium vanbaalenii (strain DSM 7251 / JCM 13017 / BCRC 16820 / KCTC 9966 / NRRL B-24157 / PYR-1) (Mycobacterium vanbaalenii) protein is Elongation factor P.